The following is a 78-amino-acid chain: Omega-conotoxin-like SO-4 (78 aa).

An N-terminal signal peptide occupies residues Met-1–Ala-22. The propeptide occupies Asp-23–Lys-42. Cystine bridges form between Cys-46-Cys-62, Cys-53-Cys-65, and Cys-61-Cys-72.

It belongs to the conotoxin O1 superfamily. In terms of tissue distribution, expressed by the venom duct.

The protein localises to the secreted. Its function is as follows. Omega-conotoxins act at presynaptic membranes, they bind and block voltage-gated calcium channels (Cav). This is Omega-conotoxin-like SO-4 (SO4) from Conus striatus (Striated cone).